We begin with the raw amino-acid sequence, 793 residues long: Splicing factor 3A subunit 1 (793 aa).

The interval 1–42 (MPAGPVQAVPPPPPAATEPKQPTEEEASSKEDSTPSKPVVGI) is disordered. Lys-20 participates in a covalent cross-link: Glycyl lysine isopeptide (Lys-Gly) (interchain with G-Cter in SUMO2). Basic and acidic residues predominate over residues 21–34 (QPTEEEASSKEDST). The stretch at 52-94 (IVDKTASFVARNGPEFEARIRQNEINNPKFNFLNPNDPYHAYY) is one SURP motif 1 repeat. Lys-55 carries the post-translational modification N6-acetyllysine. A Glycyl lysine isopeptide (Lys-Gly) (interchain with G-Cter in SUMO2) cross-link involves residue Lys-131. An SURP motif 2 repeat occupies 166–208 (VVKLTAQFVARNGRQFLTQLMQKEQRNYQFDFLRPQHSLFNYF). Residues 318 to 412 (GESEEVEMEV…PAPAPDEYLV (95 aa)) are disordered. Phosphoserine occurs at positions 320, 329, and 359. Acidic residues-rich tracts occupy residues 320 to 334 (SEEV…EEDE) and 354 to 364 (DMDEGSDDEEE). The span at 368-384 (VPPPPETPMPPPLPPTP) shows a compositional bias: pro residues. Over residues 388–397 (IVRKDYDPKA) the composition is skewed to basic and acidic residues. Ser-413 bears the Phosphoserine mark. A Glycyl lysine isopeptide (Lys-Gly) (interchain with G-Cter in SUMO2) cross-link involves residue Lys-424. Ser-451 carries the phosphoserine modification. Tyr-456 is modified (phosphotyrosine). Residues 488-502 (IGEEEIQKPEEKVTW) are compositionally biased toward basic and acidic residues. 3 disordered regions span residues 488–518 (IGEE…AAQA), 530–584 (HKAK…AMPP), and 666–685 (PMPP…SKKL). A Glycyl lysine isopeptide (Lys-Gly) (interchain with G-Cter in SUMO2) cross-link involves residue Lys-499. Ser-508 carries the phosphoserine modification. The segment covering 509 to 518 (MARTQQAAQA) has biased composition (polar residues). Lys-542 is covalently cross-linked (Glycyl lysine isopeptide (Lys-Gly) (interchain with G-Cter in SUMO2)). The span at 563 to 572 (ATNIPSSAPP) shows a compositional bias: polar residues. The segment covering 666–675 (PMPPVHPPPP) has biased composition (pro residues). The segment at 680–702 (PASKKLKTEDSLMPEEEFLRRNK) is required and sufficient for nuclear import. Residue Lys-686 forms a Glycyl lysine isopeptide (Lys-Gly) (interchain with G-Cter in SUMO2) linkage. Positions 707 to 793 (IKVQVPNMQD…ALKERGGRKK (87 aa)) constitute a Ubiquitin-like domain. The residue at position 759 (Tyr-759) is a Phosphotyrosine.

As to quaternary structure, component of the 17S U2 SnRNP complex, a ribonucleoprotein complex that contains small nuclear RNA (snRNA) U2 and a number of specific proteins. Part of the SF3A subcomplex of the 17S U2 SnRNP complex which is composed of three subunits; SF3A3/SAP61, SF3A2/SAP62 and SF3A1/SAP114. SF3A associates with the splicing factor SF3B and a 12S RNA unit to form the mature 17S U2 small nuclear ribonucleoprotein complex (17S U2 snRNP). SF3A1 functions as a scaffold that interacts directly with both SF3A2 and SF3A3. Identified in the spliceosome 'E' complex, a precursor of the spliceosome 'A' complex. Identified in the spliceosome 'A' and 'B' complexes. Identified in the spliceosome 'C' complex. Interacts with P2RX6; resulting in a reduction of the splicing activity.

It is found in the nucleus. Its subcellular location is the nucleus speckle. Its function is as follows. Component of the 17S U2 SnRNP complex of the spliceosome, a large ribonucleoprotein complex that removes introns from transcribed pre-mRNAs. The 17S U2 SnRNP complex (1) directly participates in early spliceosome assembly and (2) mediates recognition of the intron branch site during pre-mRNA splicing by promoting the selection of the pre-mRNA branch-site adenosine, the nucleophile for the first step of splicing. Within the 17S U2 SnRNP complex, SF3A1 is part of the SF3A subcomplex that contributes to the assembly of the 17S U2 snRNP, and the subsequent assembly of the pre-spliceosome 'E' complex and the pre-catalytic spliceosome 'A' complex. Involved in pre-mRNA splicing as a component of pre-catalytic spliceosome 'B' complexes. The protein is Splicing factor 3A subunit 1 (SF3A1) of Bos taurus (Bovine).